A 420-amino-acid chain; its full sequence is Diaminobutyrate--2-oxoglutarate transaminase (420 aa).

K271 bears the N6-(pyridoxal phosphate)lysine mark.

The protein belongs to the class-III pyridoxal-phosphate-dependent aminotransferase family. Requires pyridoxal 5'-phosphate as cofactor.

The enzyme catalyses L-2,4-diaminobutanoate + 2-oxoglutarate = L-aspartate 4-semialdehyde + L-glutamate. Its pathway is amine and polyamine biosynthesis; ectoine biosynthesis; L-ectoine from L-aspartate 4-semialdehyde: step 1/3. Catalyzes reversively the conversion of L-aspartate beta-semialdehyde (ASA) to L-2,4-diaminobutyrate (DABA) by transamination with L-glutamate. The sequence is that of Diaminobutyrate--2-oxoglutarate transaminase (ectB) from Streptomyces anulatus (Streptomyces chrysomallus).